We begin with the raw amino-acid sequence, 371 residues long: uncharacterized protein (371 aa).

This is an uncharacterized protein from Rickettsia prowazekii (strain Madrid E).